Consider the following 455-residue polypeptide: Chromosomal replication initiator protein DnaA (455 aa).

The segment at 1–75 (MDTNNNIEKE…EILSQNKVGM (75 aa)) is domain I, interacts with DnaA modulators. Residues 75 to 106 (MHLAHSVDVRIEVAPKIQINAQANINYKAIKT) are domain II. The domain III, AAA+ region stretch occupies residues 107-321 (SVKDSYTFEN…GAIIKISVNA (215 aa)). Residues Gly-151, Gly-153, Lys-154, and Thr-155 each coordinate ATP. The domain IV, binds dsDNA stretch occupies residues 322 to 455 (NLMNAPIDLN…DKKTAFNSSE (134 aa)).

Belongs to the DnaA family. In terms of assembly, oligomerizes as a right-handed, spiral filament on DNA at oriC.

The protein localises to the cytoplasm. Functionally, plays an essential role in the initiation and regulation of chromosomal replication. ATP-DnaA binds to the origin of replication (oriC) to initiate formation of the DNA replication initiation complex once per cell cycle. Binds the DnaA box (a 9 base pair repeat at the origin) and separates the double-stranded (ds)DNA. Forms a right-handed helical filament on oriC DNA; dsDNA binds to the exterior of the filament while single-stranded (ss)DNA is stabiized in the filament's interior. The ATP-DnaA-oriC complex binds and stabilizes one strand of the AT-rich DNA unwinding element (DUE), permitting loading of DNA polymerase. After initiation quickly degrades to an ADP-DnaA complex that is not apt for DNA replication. Binds acidic phospholipids. This Helicobacter pylori (strain P12) protein is Chromosomal replication initiator protein DnaA.